A 113-amino-acid polypeptide reads, in one-letter code: Hydrogenase maturation factor HypA (113 aa).

Residue His-2 participates in Ni(2+) binding. Zn(2+)-binding residues include Cys-73, Cys-76, Cys-89, and Cys-92.

This sequence belongs to the HypA/HybF family.

Its function is as follows. Involved in the maturation of [NiFe] hydrogenases. Required for nickel insertion into the metal center of the hydrogenase. The chain is Hydrogenase maturation factor HypA from Rhizobium leguminosarum bv. viciae.